The chain runs to 468 residues: MSNVKSSKPVFPENAGSNEYAASLDAADPLASFRDKFIIPSKANINSKKLAKPGLSSDPCIYFCGNSLGIQPKATAKYLEAQLDTWSSIGVSGHFVDLEGSPLKQWQLLSEQAAASMSKIVGAQAEEVAAMGTLTANLHLLLASFYKPTPTKHKILLDWKAFPSDHYAIESHLAWHNLDPKQSMVLIGPDEGEYEISTEKILSYIDEHAESAALILLPGIQYYTGQLFDIQKITAYAQSRDLTVGWDLAHAYGNVELKLHDWDVDFAAWCTYKYGNAGPGAMGGLFVHERHGRVDYSEGEDAPKFRHRLTGWYGGDRSVRFKMDNNFKPIPGAGGWQLSNPSAIDLACLCASLSVFDETSMAELRKKSVMLTAYLEHLLLKDTTDETRPFRIVTPADPEARGAQLSVLLKPGLLQNVSQKLQEGGIVCDKREPGVVRVAPTPLYNTFTDVWKFVSYFKAALDEPELKN.

Pyridoxal 5'-phosphate is bound by residues leucine 134, threonine 135, 162–165, aspartate 247, histidine 250, and tyrosine 272; that span reads FPSD. Residue lysine 273 is modified to N6-(pyridoxal phosphate)lysine. Tryptophan 312 and asparagine 340 together coordinate pyridoxal 5'-phosphate.

Belongs to the kynureninase family. Homodimer. Requires pyridoxal 5'-phosphate as cofactor.

Its subcellular location is the cytoplasm. It catalyses the reaction L-kynurenine + H2O = anthranilate + L-alanine + H(+). It carries out the reaction 3-hydroxy-L-kynurenine + H2O = 3-hydroxyanthranilate + L-alanine + H(+). Its pathway is amino-acid degradation; L-kynurenine degradation; L-alanine and anthranilate from L-kynurenine: step 1/1. The protein operates within cofactor biosynthesis; NAD(+) biosynthesis; quinolinate from L-kynurenine: step 2/3. Catalyzes the cleavage of L-kynurenine (L-Kyn) and L-3-hydroxykynurenine (L-3OHKyn) into anthranilic acid (AA) and 3-hydroxyanthranilic acid (3-OHAA), respectively. The protein is Kynureninase 2 (bna5-2) of Aspergillus oryzae (strain ATCC 42149 / RIB 40) (Yellow koji mold).